We begin with the raw amino-acid sequence, 332 residues long: Probable isoaspartyl peptidase/L-asparaginase CG7860 (332 aa).

Thr-188 acts as the Nucleophile in catalysis. Substrate is bound by residues 216–219 (RIGD) and 239–242 (TGHG).

It belongs to the Ntn-hydrolase family. As to quaternary structure, heterodimer of an alpha and beta chain produced by autocleavage. Post-translationally, cleaved into an alpha and beta chain by autocatalysis; this activates the enzyme. The N-terminal residue of the beta subunit is responsible for the nucleophile hydrolase activity.

The enzyme catalyses L-asparagine + H2O = L-aspartate + NH4(+). It catalyses the reaction Cleavage of a beta-linked Asp residue from the N-terminus of a polypeptide.. Functionally, has both L-asparaginase and beta-aspartyl peptidase activity. Does not have aspartylglucosaminidase activity and is inactive toward GlcNAc-L-Asn. Likewise, has no activity toward glutamine. This chain is Probable isoaspartyl peptidase/L-asparaginase CG7860, found in Drosophila melanogaster (Fruit fly).